The primary structure comprises 269 residues: Aminoglycoside (3'') (9) adenylyltransferase (269 aa).

It carries out the reaction streptomycin + ATP = 3''-O-adenylylstreptomycin + diphosphate. It catalyses the reaction spectinomycin + ATP = 9-O-adenylylspectinomycin + diphosphate. In terms of biological role, mediates bacterial resistance to the antibiotic spectinomycin and probably also to streptomycin. In Rhizobium radiobacter (Agrobacterium tumefaciens), this protein is Aminoglycoside (3'') (9) adenylyltransferase.